A 349-amino-acid polypeptide reads, in one-letter code: tRNA pseudouridine synthase D (349 aa).

F27 is a binding site for substrate. D80 (nucleophile) is an active-site residue. Residue N129 coordinates substrate. In terms of domain architecture, TRUD spans 155-303 (GVPNYFGAQR…VEASRRAMLL (149 aa)). A substrate-binding site is contributed by F329.

It belongs to the pseudouridine synthase TruD family.

The enzyme catalyses uridine(13) in tRNA = pseudouridine(13) in tRNA. Its function is as follows. Responsible for synthesis of pseudouridine from uracil-13 in transfer RNAs. The protein is tRNA pseudouridine synthase D of Salmonella dublin (strain CT_02021853).